The chain runs to 147 residues: Large ribosomal subunit protein uL15 (147 aa).

Residues 1-55 (MKLDNLAPQPGAKKRKRRVGRGIAAGQGASCGFGMRGQKSRSGRPTRPGFEGGQM) are disordered. The span at 23 to 35 (IAAGQGASCGFGM) shows a compositional bias: gly residues.

The protein belongs to the universal ribosomal protein uL15 family. Part of the 50S ribosomal subunit.

Binds to the 23S rRNA. The chain is Large ribosomal subunit protein uL15 from Synechococcus elongatus (strain ATCC 33912 / PCC 7942 / FACHB-805) (Anacystis nidulans R2).